The chain runs to 250 residues: Iron-sulfur assembly protein 1 (250 aa).

The interval 54–89 (AADSVSPDSQRPGKKPFKFIVSNQSKSSKASKSPKW) is disordered. Residues 75-89 (SNQSKSSKASKSPKW) show a composition bias toward low complexity. 3 residues coordinate Fe cation: Cys-178, Cys-242, and Cys-244.

This sequence belongs to the HesB/IscA family.

It is found in the mitochondrion matrix. Its function is as follows. Involved in the assembly of mitochondrial and cytoplasmic iron-sulfur proteins. Probably involved in the binding of an intermediate of Fe/S cluster assembly. The sequence is that of Iron-sulfur assembly protein 1 (ISA1) from Saccharomyces cerevisiae (strain ATCC 204508 / S288c) (Baker's yeast).